The chain runs to 305 residues: tRNA pseudouridine synthase B (305 aa).

Residue Asp-39 is the Nucleophile of the active site.

Belongs to the pseudouridine synthase TruB family. Type 1 subfamily.

The catalysed reaction is uridine(55) in tRNA = pseudouridine(55) in tRNA. Its function is as follows. Responsible for synthesis of pseudouridine from uracil-55 in the psi GC loop of transfer RNAs. The polypeptide is tRNA pseudouridine synthase B (Staphylococcus aureus (strain Newman)).